The sequence spans 146 residues: MYPAHLLVLLAVCVSLLGAASIPPQPLNLVQFSYLIQCANHGSRATWHYTDYGCYCGSGGSGTPVDELDRCCQTHDNCYGEAEKKGCYPKMLAYDYYCGGDGPYCRNIKKECQRFVCDCDVEAAKCFARAPYNDANWNIDTKKRCQ.

Positions M1 to A19 are cleaved as a signal peptide. Positions A20–L27 are excised as a propeptide. 7 disulfides stabilise this stretch: C38–C98, C54–C145, C56–C72, C71–C126, C78–C119, C87–C112, and C105–C117. Residues Y55, G57, and G59 each coordinate Ca(2+). H75 is an active-site residue. A Ca(2+)-binding site is contributed by D76. D120 is a catalytic residue.

Belongs to the phospholipase A2 family. Group I subfamily. D49 sub-subfamily. Ca(2+) serves as cofactor. As to expression, expressed by the venom gland.

The protein resides in the secreted. The enzyme catalyses a 1,2-diacyl-sn-glycero-3-phosphocholine + H2O = a 1-acyl-sn-glycero-3-phosphocholine + a fatty acid + H(+). Functionally, snake venom phospholipase A2 (PLA2) that inhibits collagen-induced platelet aggregation. PLA2 catalyzes the calcium-dependent hydrolysis of the 2-acyl groups in 3-sn-phosphoglycerides. This is Acidic phospholipase A2 S14-72F from Austrelaps superbus (Lowland copperhead snake).